The chain runs to 299 residues: Hemolysin C homolog (299 aa).

2 consecutive CBS domains span residues Met-80–Leu-142 and Leu-145–Glu-202.

It belongs to the UPF0053 family. Hemolysin C subfamily.

This is Hemolysin C homolog (tlyC) from Rickettsia massiliae (strain Mtu5).